A 255-amino-acid polypeptide reads, in one-letter code: MALAKRIIPCLDVKDGRVVKGVNFIGLRDAGDPVEAAKRYNGEGADELTFLDITASSDNRDTILHIIEEVAGQVFIPLTVGGGVRTVADIRRLLNAGADKVSINTAAVTRPDLINEAAGFFGSQAIVAAVDAKAVNPENTRWEIFTHGGRNPTGLDAVEWAVEMQKRGAGEILLTGMDRDGTKQGFNLPLTRAVAEAVDIPVIASGGVGNVRHLIEGITEGKADAVLAAGIFHFGEIAIREAKRTMREAGIEVRL.

Residues D12 and D131 contribute to the active site.

This sequence belongs to the HisA/HisF family. Heterodimer of HisH and HisF.

It localises to the cytoplasm. The catalysed reaction is 5-[(5-phospho-1-deoxy-D-ribulos-1-ylimino)methylamino]-1-(5-phospho-beta-D-ribosyl)imidazole-4-carboxamide + L-glutamine = D-erythro-1-(imidazol-4-yl)glycerol 3-phosphate + 5-amino-1-(5-phospho-beta-D-ribosyl)imidazole-4-carboxamide + L-glutamate + H(+). It functions in the pathway amino-acid biosynthesis; L-histidine biosynthesis; L-histidine from 5-phospho-alpha-D-ribose 1-diphosphate: step 5/9. In terms of biological role, IGPS catalyzes the conversion of PRFAR and glutamine to IGP, AICAR and glutamate. The HisF subunit catalyzes the cyclization activity that produces IGP and AICAR from PRFAR using the ammonia provided by the HisH subunit. This is Imidazole glycerol phosphate synthase subunit HisF from Neisseria gonorrhoeae (strain ATCC 700825 / FA 1090).